A 317-amino-acid chain; its full sequence is Beta-ketoacyl-[acyl-carrier-protein] synthase III (317 aa).

Active-site residues include Cys-112 and His-244. The interval 245–249 is ACP-binding; that stretch reads QANIR. Asn-274 is a catalytic residue.

It belongs to the thiolase-like superfamily. FabH family. As to quaternary structure, homodimer.

It is found in the cytoplasm. It carries out the reaction malonyl-[ACP] + acetyl-CoA + H(+) = 3-oxobutanoyl-[ACP] + CO2 + CoA. The protein operates within lipid metabolism; fatty acid biosynthesis. Catalyzes the condensation reaction of fatty acid synthesis by the addition to an acyl acceptor of two carbons from malonyl-ACP. Catalyzes the first condensation reaction which initiates fatty acid synthesis and may therefore play a role in governing the total rate of fatty acid production. Possesses both acetoacetyl-ACP synthase and acetyl transacylase activities. Its substrate specificity determines the biosynthesis of branched-chain and/or straight-chain of fatty acids. The sequence is that of Beta-ketoacyl-[acyl-carrier-protein] synthase III from Rickettsia massiliae (strain Mtu5).